A 509-amino-acid polypeptide reads, in one-letter code: MDIRAAEISAILKDQIKNFGKEAEVSEVGQVLSVGDGIARVYGLDNVQAGEMVEFPGGIRGMALNLESDNVGVVIFGSDRDIKEGDTVKRTGAIVDVPVGPELLGRVVDALGNPIDGKGPINATRRSRVDIKAPGIIPRKSVHEPMSTGLKAIDALIPVGRGQRELVIGDRQTGKTAILLDAFLNQKAIHDNGPEGEKLYCVYVAIGQKRSTVAQFVKVLEERGALKYSIIVAATASDPAPMQYLAPFAGCAMGEYFRDNGMHALIGYDDLSKQAVSYRQMSLLLRRPPGREAYPGDVFYLHSRLLERAAKMNDDMGAGSLTALPVIETQGNDVSAFIPTNVISITDGQIFLETDLFYQGIRPAVNVGLSVSRVGSAAQIKAMKQVAGSIKGELAQYREMAAFAQFGSDLDAATQRLLNRGARLTELLKQPQFSPLKTEEQVAVIFAGVNGYLDKLPVASVGKFEQGFLSYLRSEGSAILDAIRTEKAISDDTRGKLTAALDSFAKSFS.

ATP is bound at residue 169-176 (GDRQTGKT).

The protein belongs to the ATPase alpha/beta chains family. In terms of assembly, F-type ATPases have 2 components, CF(1) - the catalytic core - and CF(0) - the membrane proton channel. CF(1) has five subunits: alpha(3), beta(3), gamma(1), delta(1), epsilon(1). CF(0) has three main subunits: a(1), b(2) and c(9-12). The alpha and beta chains form an alternating ring which encloses part of the gamma chain. CF(1) is attached to CF(0) by a central stalk formed by the gamma and epsilon chains, while a peripheral stalk is formed by the delta and b chains.

The protein localises to the cell inner membrane. The catalysed reaction is ATP + H2O + 4 H(+)(in) = ADP + phosphate + 5 H(+)(out). Functionally, produces ATP from ADP in the presence of a proton gradient across the membrane. The alpha chain is a regulatory subunit. This is ATP synthase subunit alpha from Rhizobium johnstonii (strain DSM 114642 / LMG 32736 / 3841) (Rhizobium leguminosarum bv. viciae).